The chain runs to 65 residues: Large ribosomal subunit protein bL35 (65 aa).

The interval 1-26 (MPKIKTLRGAAKRFKKTASGGFKRKQ) is disordered. The segment covering 10 to 26 (AAKRFKKTASGGFKRKQ) has biased composition (basic residues).

Belongs to the bacterial ribosomal protein bL35 family.

The protein is Large ribosomal subunit protein bL35 of Histophilus somni (strain 2336) (Haemophilus somnus).